The primary structure comprises 153 residues: Putative nuclear shuttle protein (153 aa).

Belongs to the nanoviridae nuclear shuttle protein family.

The protein localises to the host nucleus. Its subcellular location is the host cytoplasm. Its function is as follows. Putative nuclear shuttle protein. In Trifolium subterraneum (Subterranean clover), this protein is Putative nuclear shuttle protein (DNA-N).